Consider the following 75-residue polypeptide: Protein Tlp homolog (75 aa).

The tract at residues 48 to 75 (KNQRRREALDGMREEIKDEARDKKNGYM) is disordered.

It belongs to the Tlp family.

The chain is Protein Tlp homolog from Clostridium botulinum (strain 657 / Type Ba4).